Here is a 427-residue protein sequence, read N- to C-terminus: Mitogen-activated protein kinase 8B (427 aa).

Residues 26-321 (YQNLRPIGSG…VDEALQHPYI (296 aa)) form the Protein kinase domain. ATP-binding positions include 33–40 (GSGAQGIV) and lysine 55. Residue aspartate 151 is the Proton acceptor of the active site. Threonine 183 carries the post-translational modification Phosphothreonine. The TXY motif lies at 183 to 185 (TPY). Tyrosine 185 carries the phosphotyrosine modification. A disordered region spans residues 372 to 427 (IRGQPSPIGAAVINGSPQPSSSSSINDVSSMSTEPTVASDTDSSLEASAGPLSCCR). Low complexity predominate over residues 387 to 403 (SPQPSSSSSINDVSSMS). The span at 404-417 (TEPTVASDTDSSLE) shows a compositional bias: polar residues.

This sequence belongs to the protein kinase superfamily. CMGC Ser/Thr protein kinase family. MAP kinase subfamily. The cofactor is Mg(2+). Dually phosphorylated on Thr-183 and Tyr-185, which activates the enzyme. Expressed at high levels in the ovary and at lower levels in brain, gill, heart, spleen, liver, kidney, muscle, bladder and gut.

The enzyme catalyses L-seryl-[protein] + ATP = O-phospho-L-seryl-[protein] + ADP + H(+). It catalyses the reaction L-threonyl-[protein] + ATP = O-phospho-L-threonyl-[protein] + ADP + H(+). Its activity is regulated as follows. Activated by threonine and tyrosine phosphorylation. In terms of biological role, responds to activation by environmental stress and pro-inflammatory cytokines by phosphorylating a number of transcription factors, primarily components of AP-1 such as c-Jun and ATF2 and thus regulates AP-1 transcriptional activity. May play a role in the regulation of the circadian clock. The polypeptide is Mitogen-activated protein kinase 8B (mapk8b) (Cyprinus carpio (Common carp)).